Reading from the N-terminus, the 613-residue chain is tRNA 5-methylaminomethyl-2-thiouridine biosynthesis bifunctional protein MnmC (613 aa).

The interval 1-225 (MKKAKLIFKD…KREMIKAYLE (225 aa)) is tRNA (mnm(5)s(2)U34)-methyltransferase. The segment at 252-613 (IGAGISSAVL…FLIRKLKKGL (362 aa)) is FAD-dependent cmnm(5)s(2)U34 oxidoreductase.

The protein in the N-terminal section; belongs to the methyltransferase superfamily. tRNA (mnm(5)s(2)U34)-methyltransferase family. In the C-terminal section; belongs to the DAO family. It depends on FAD as a cofactor.

Its subcellular location is the cytoplasm. It catalyses the reaction 5-aminomethyl-2-thiouridine(34) in tRNA + S-adenosyl-L-methionine = 5-methylaminomethyl-2-thiouridine(34) in tRNA + S-adenosyl-L-homocysteine + H(+). Catalyzes the last two steps in the biosynthesis of 5-methylaminomethyl-2-thiouridine (mnm(5)s(2)U) at the wobble position (U34) in tRNA. Catalyzes the FAD-dependent demodification of cmnm(5)s(2)U34 to nm(5)s(2)U34, followed by the transfer of a methyl group from S-adenosyl-L-methionine to nm(5)s(2)U34, to form mnm(5)s(2)U34. The polypeptide is tRNA 5-methylaminomethyl-2-thiouridine biosynthesis bifunctional protein MnmC (Campylobacter jejuni subsp. jejuni serotype O:2 (strain ATCC 700819 / NCTC 11168)).